The primary structure comprises 176 residues: Ribosome maturation factor RimM (176 aa).

The 74-residue stretch at 92-165 folds into the PRC barrel domain; it reads EDEFLYSDLI…RLVVVPPVYA (74 aa).

This sequence belongs to the RimM family. In terms of assembly, binds ribosomal protein uS19.

The protein resides in the cytoplasm. In terms of biological role, an accessory protein needed during the final step in the assembly of 30S ribosomal subunit, possibly for assembly of the head region. Essential for efficient processing of 16S rRNA. May be needed both before and after RbfA during the maturation of 16S rRNA. It has affinity for free ribosomal 30S subunits but not for 70S ribosomes. In Paramagnetospirillum magneticum (strain ATCC 700264 / AMB-1) (Magnetospirillum magneticum), this protein is Ribosome maturation factor RimM.